The sequence spans 291 residues: Nucleotide-binding protein lhv_0732 (291 aa).

13-20 (GMSGAGKT) is a binding site for ATP. 61-64 (DLRV) provides a ligand contact to GTP.

This sequence belongs to the RapZ-like family.

Functionally, displays ATPase and GTPase activities. In Lactobacillus helveticus (strain DPC 4571), this protein is Nucleotide-binding protein lhv_0732.